Consider the following 368-residue polypeptide: CST complex subunit STN1 (368 aa).

The interval Met1–Ser185 is interaction with CTC1. Positions Val57–Val155 form a DNA-binding region, OB. Winged helix-turn-helix (wHTH) stretches follow at residues Glu191–Arg295 and Glu296–Phe368.

The protein belongs to the STN1 family. Component of the CST complex, composed of TEN1/C17orf106, CTC1/C17orf68 and STN1; in the complex interacts directly with TEN1 and CTC1. Interacts with ACD/TPP1, POT1 and POLA1.

The protein localises to the nucleus. The protein resides in the chromosome. It is found in the telomere. Component of the CST complex proposed to act as a specialized replication factor promoting DNA replication under conditions of replication stress or natural replication barriers such as the telomere duplex. The CST complex binds single-stranded DNA with high affinity in a sequence-independent manner, while isolated subunits bind DNA with low affinity by themselves. Initially the CST complex has been proposed to protect telomeres from DNA degradation. However, the CST complex has been shown to be involved in several aspects of telomere replication. The CST complex inhibits telomerase and is involved in telomere length homeostasis; it is proposed to bind to newly telomerase-synthesized 3' overhangs and to terminate telomerase action implicating the association with the ACD:POT1 complex thus interfering with its telomerase stimulation activity. The CST complex is also proposed to be involved in fill-in synthesis of the telomeric C-strand probably implicating recruitment and activation of DNA polymerase alpha. The CST complex facilitates recovery from many forms of exogenous DNA damage; seems to be involved in the re-initiation of DNA replication at repaired forks and/or dormant origins. Required for efficicient replication of the duplex region of the telomere. Promotes efficient replication of lagging-strand telomeres. Promotes general replication start following replication-fork stalling implicating new origin firing. May be in involved in C-strand fill-in during late S/G2 phase independent of its role in telomere duplex replication. The chain is CST complex subunit STN1 from Macaca fascicularis (Crab-eating macaque).